Consider the following 316-residue polypeptide: Methionyl-tRNA formyltransferase (316 aa).

109-112 (SALP) contributes to the (6S)-5,6,7,8-tetrahydrofolate binding site.

Belongs to the Fmt family.

It carries out the reaction L-methionyl-tRNA(fMet) + (6R)-10-formyltetrahydrofolate = N-formyl-L-methionyl-tRNA(fMet) + (6S)-5,6,7,8-tetrahydrofolate + H(+). Functionally, attaches a formyl group to the free amino group of methionyl-tRNA(fMet). The formyl group appears to play a dual role in the initiator identity of N-formylmethionyl-tRNA by promoting its recognition by IF2 and preventing the misappropriation of this tRNA by the elongation apparatus. The sequence is that of Methionyl-tRNA formyltransferase from Nocardioides sp. (strain ATCC BAA-499 / JS614).